A 448-amino-acid chain; its full sequence is Probable glycine dehydrogenase (decarboxylating) subunit 1 (448 aa).

Belongs to the GcvP family. N-terminal subunit subfamily. As to quaternary structure, the glycine cleavage system is composed of four proteins: P, T, L and H. In this organism, the P 'protein' is a heterodimer of two subunits.

It catalyses the reaction N(6)-[(R)-lipoyl]-L-lysyl-[glycine-cleavage complex H protein] + glycine + H(+) = N(6)-[(R)-S(8)-aminomethyldihydrolipoyl]-L-lysyl-[glycine-cleavage complex H protein] + CO2. Its function is as follows. The glycine cleavage system catalyzes the degradation of glycine. The P protein binds the alpha-amino group of glycine through its pyridoxal phosphate cofactor; CO(2) is released and the remaining methylamine moiety is then transferred to the lipoamide cofactor of the H protein. The sequence is that of Probable glycine dehydrogenase (decarboxylating) subunit 1 from Listeria monocytogenes serotype 4b (strain CLIP80459).